The primary structure comprises 237 residues: RING-H2 finger protein ATL57 (237 aa).

The helical transmembrane segment at 51 to 71 threads the bilayer; that stretch reads ALTIFILLVALFFMGFFSVYF. Residues 140-182 form an RING-type; atypical zinc finger; that stretch reads CVICLSDFEEGETVKVIPHCGHVFHVDCVDTWLSSYVTCPLCR.

Belongs to the RING-type zinc finger family. ATL subfamily.

Its subcellular location is the membrane. The enzyme catalyses S-ubiquitinyl-[E2 ubiquitin-conjugating enzyme]-L-cysteine + [acceptor protein]-L-lysine = [E2 ubiquitin-conjugating enzyme]-L-cysteine + N(6)-ubiquitinyl-[acceptor protein]-L-lysine.. It participates in protein modification; protein ubiquitination. The polypeptide is RING-H2 finger protein ATL57 (ATL57) (Arabidopsis thaliana (Mouse-ear cress)).